We begin with the raw amino-acid sequence, 779 residues long: MRTLEDSSGTVLHRLIQEQLRYGNLTETRTLLAIQQQALRGGAGTGGTGSPQASLEILAPEDSQVLQQATRQEPQGQEHQGGENHLAENTLYRLCPQPSKGEELPTYEEAKAHSQYYAAQQAGTRPHAGDRDPRGAPGGSRRQDEALRELRHGHVRSLSERLLQLSLERNGARAPSHMSSSHSFPQLARNQQGPPLRGPPAEGPESRGPPPQYPHVVLAHETTTAVTDPRYRARGSPHFQHAEVRILQAQVPPVFLQQQQQYQYLQQSQEHPPPPHPAALGHGPLSSLSPPAVEGPVSAQASSATSGSAHLAQMEAVLRENARLQRDNERLQRELESSAEKAGRIEKLESEIQRLSEAHESLTRASSKREALEKTMRNKMDSEMRRLQDFNRDLRERLESANRRLASKTQEAQAGSQDMVAKLLAQSYEQQQEQEKLEREMALLRGAIEDQRRRAELLEQALGNAQGRAARAEEELRKKQAYVEKVERLQQALGQLQAACEKREQLELRLRTRLEQELKALRAQQRQAGAPGGSSGSGGSPELSALRLSEQLREKEEQILALEADMTKWEQKYLEERAMRQFAMDAAATAAAQRDTTLIRHSPQPSPSSSFNEGLLTGGHRHQEMESRLKVLHAQILEKDAVIKVLQQRSRRDPGKAIQGSLRPAKSVPSVFAAAAAGTQGWQGLSSSERQTADAPARLTTDRAPTEEPVVTAPPAAHAKHGSRDGSTQTEGPPDSTSTCLPPEPDSLLGCSSSQRAASLDSVATSRVQDLSDMVEILI.

Disordered stretches follow at residues 41-215 (GGAG…QYPH) and 263-308 (QYLQ…TSGS). Composition is skewed to basic and acidic residues over residues 100 to 112 (KGEE…EAKA) and 141 to 152 (RRQDEALRELRH). The required for interaction with CDH5 stretch occupies residues 101–307 (GEELPTYEEA…SAQASSATSG (207 aa)). The residue at position 107 (tyrosine 107) is a Phosphotyrosine; by FGFR1. Residues 160–169 (ERLLQLSLER) show a composition bias toward low complexity. The segment covering 177–193 (HMSSSHSFPQLARNQQG) has biased composition (polar residues). Positions 196–213 (LRGPPAEGPESRGPPPQY) are enriched in pro residues. Positions 220–307 (HETTTAVTDP…SAQASSATSG (88 aa)) are required for interaction with CDH1. The segment covering 298 to 308 (SAQASSATSGS) has biased composition (low complexity). A coiled-coil region spans residues 308–581 (SAHLAQMEAV…KYLEERAMRQ (274 aa)). Residues lysine 347 and lysine 408 each participate in a glycyl lysine isopeptide (Lys-Gly) (interchain with G-Cter in ubiquitin) cross-link. Disordered regions lie at residues 522–543 (RAQQ…SPEL) and 679–753 (TQGW…GCSS). Positions 530–539 (APGGSSGSGG) are enriched in gly residues. 2 stretches are compositionally biased toward polar residues: residues 680-690 (QGWQGLSSSER) and 725-740 (DGST…TSTC). Serine 759 and serine 762 each carry phosphoserine. The PDZ-binding motif lies at 776-779 (EILI).

This sequence belongs to the angiomotin family. As to quaternary structure, part of a complex composed of AMOTL2, MAGI1 and CDH5, within the complex AMOTL2 acts as a scaffold protein for the interaction of MAGI1 with CDH5. The complex is required for coupling actin fibers to cell junctions in endothelial cells. Within the complex AMOTL2 (via its N-terminus) interacts with CDH5. Interacts (via N-terminus) with MAGI1. Interacts (via N-terminus) with ACTB; the interaction facilitates binding of cell junction complexes to actin fibers in endothelial cells. Interacts with CDH1; the interaction may facilitate binding of radial actin fibers to cell junction complexes. Interacts with SRC. Interacts with YAP1; the interaction is required for ubiquitination of AMOTL2 and localization of YAP1 to tight junctions. Interacts with WWP1; the interaction facilitates WWP1 interaction with the Crumbs complex and subsequent WWP1 translocation to the plasma membrane. WWP1 interaction with the Crumbs complex promotes WWP1 monoubiquitination of AMOTL2 which subsequently activates the Hippo signaling pathway. When ubiquitinated interacts with LATS2 (via UBA domain); the interaction promotes LATS2 phosphorylation of YAP1. Interacts (via PPXY motif) with WWTR1/TAZ (via WW domain); the interaction promotes WWTR1/TAZ localization to the cytoplasm and thereby inhibition of its transcriptional properties. Interacts with PHLDB2; interaction may facilitate PHLDB2 localization to the myotube podosome cortex that surrounds the core. Monoubiquitinated at Lys-347 and Lys-408 by Crumbs complex-bound WWP1. De-ubiquitinated at Lys-347 and Lys-408 by USP9X; the interaction may be promoted by cell contact inhibition. Deubiquitination of AMOTL2 negatively regulates Hippo signaling activation. Post-translationally, phosphorylation at Tyr-107 is necessary for efficient binding to SRC and synergistically functioning with SRC to activate the downstream MAPK pathway.

The protein resides in the recycling endosome. The protein localises to the cytoplasm. It localises to the cell projection. Its subcellular location is the podosome. It is found in the cell junction. Regulates the translocation of phosphorylated SRC to peripheral cell-matrix adhesion sites. Required for proper architecture of actin filaments. Plays a role in coupling actin fibers to cell junctions in endothelial cells and is therefore required for correct endothelial cell morphology via facilitating transcellular transmission of mechanical force resulting in endothelial cell elongation. Required for the anchoring of radial actin fibers to CDH1 junction complexes at the cell membrane which facilitates organization of radial actin fiber structure and cellular response to contractile forces. This contributes to maintenance of cell area, size, shape, epithelial sheet organization and trophectoderm cell properties that facilitate blastocyst zona hatching. Inhibits the Wnt/beta-catenin signaling pathway, probably by recruiting CTNNB1 to recycling endosomes and hence preventing its translocation to the nucleus. Participates in angiogenesis. Activates the Hippo signaling pathway in response to cell contact inhibition via interaction with and ubiquitination by Crumbs complex-bound WWP1. Ubiquitinated AMOTL2 then interacts with LATS2 which in turn phosphorylates YAP1, excluding it from the nucleus and localizing it to the cytoplasm and tight junctions, therefore ultimately repressing YAP1-driven transcription of target genes. Acts to inhibit WWTR1/TAZ transcriptional coactivator activity via sequestering WWTR1/TAZ in the cytoplasm and at tight junctions. Regulates the size and protein composition of the podosome cortex and core at myofibril neuromuscular junctions. Selectively promotes FGF-induced MAPK activation through SRC. May play a role in the polarity, proliferation and migration of endothelial cells. The sequence is that of Angiomotin-like protein 2 from Homo sapiens (Human).